The primary structure comprises 695 residues: Nicastrin (695 aa).

The signal sequence occupies residues 1-22 (MEMRLNAASIWLLILSYGATIA). At 23–654 (QGERTRDKMY…IFLRPSNVHQ (632 aa)) the chain is on the extracellular side. Asn45, Asn108, Asn116, Asn138, Asn381, Asn461, Asn489, Asn585, and Asn609 each carry an N-linked (GlcNAc...) asparagine glycan. The chain crosses the membrane as a helical span at residues 655-675 (VTTLSVGIVVLIISFCLVYII). The Cytoplasmic portion of the chain corresponds to 676-695 (SSRSEVLFEDLPASNAALFG).

This sequence belongs to the nicastrin family. Component of the gamma-secretase complex, a complex composed of a presenilin (Psn) homodimer, nicastrin (Nct), Aph-1 and Pen-2.

It localises to the membrane. Its function is as follows. Essential subunit of the gamma-secretase complex, an endoprotease complex that catalyzes the intramembrane cleavage of integral membrane proteins such as Notch. It probably represents a stabilizing cofactor required for the assembly of the gamma-secretase complex. In Drosophila melanogaster (Fruit fly), this protein is Nicastrin.